An 883-amino-acid polypeptide reads, in one-letter code: 3-hydroxy-3-methylglutaryl-coenzyme A reductase (883 aa).

Topologically, residues 1 to 9 are cytoplasmic; that stretch reads MLSRLFRMH. The chain crosses the membrane as a helical span at residues 10–39; it reads GQFVASHPWEVIVGTVTLTICMMSMNMFTG. The Lumenal segment spans residues 40-56; sequence NDKICGWNYACPKFEED. The helical transmembrane segment at 57–78 threads the bilayer; it reads VLSSDIIILTITRCIAILYIYF. The Cytoplasmic segment spans residues 79–89; the sequence is QFQNLRQLGSK. A helical transmembrane segment spans residues 90-114; it reads YILGIAGLFTIFSSFVFSTVVIHFL. Residues 115–123 are Lumenal-facing; sequence DKELTGLNE. A helical membrane pass occupies residues 124-149; sequence ALPFFLLLIDLSKASALAKFALSSNS. Residues 150–159 lie on the Cytoplasmic side of the membrane; the sequence is QDEVRDNIAR. A helical transmembrane segment spans residues 160–187; that stretch reads GMAILGPTFTLEALVECLVIGVGTMSGV. Topologically, residues 188 to 191 are lumenal; sequence RQLE. A helical membrane pass occupies residues 192–220; it reads IMCCFGCMSVLANYFAFMTFFPACVSLVL. The Cytoplasmic segment spans residues 221 to 249; the sequence is ELSRESREGRPIWQLSQFASVLEEEEDNK. The helical transmembrane segment at 250–276 threads the bilayer; the sequence is PNPVTQRVKMIMSLGLVLVHAHSRWIS. At 277 to 316 the chain is on the lumenal side; the sequence is EPSSQNSTSISDHEVTTMLDDMMPKRVEPSMPLWQFYLSR. An N-linked (GlcNAc...) asparagine glycan is attached at Asn282. Residues 317–341 traverse the membrane as a helical segment; it reads MVTMDVEQIITLGLALLLAVKYIFF. The Cytoplasmic segment spans residues 342–883; the sequence is EQTETESTFS…LPGTCTKKAA (542 aa). The segment at 373–396 is disordered; it reads REPEQEKTVHVSTTEEASSKEETE. Active-site charge relay system residues include Glu554, Lys686, and Asp762. His861 serves as the catalytic Proton donor.

This sequence belongs to the HMG-CoA reductase family. As to quaternary structure, homotetramer. Homodimer.

The protein localises to the endoplasmic reticulum membrane. It localises to the peroxisome membrane. It catalyses the reaction (R)-mevalonate + 2 NADP(+) + CoA = (3S)-3-hydroxy-3-methylglutaryl-CoA + 2 NADPH + 2 H(+). Its pathway is metabolic intermediate biosynthesis; (R)-mevalonate biosynthesis; (R)-mevalonate from acetyl-CoA: step 3/3. Catalyzes the conversion of (3S)-hydroxy-3-methylglutaryl-CoA (HMG-CoA) to mevalonic acid, the rate-limiting step in the synthesis of cholesterol and other isoprenoids, thus plays a critical role in cellular cholesterol homeostasis. This chain is 3-hydroxy-3-methylglutaryl-coenzyme A reductase (hmgcr), found in Xenopus laevis (African clawed frog).